A 444-amino-acid polypeptide reads, in one-letter code: F-box/FBD/LRR-repeat protein At5g53840 (444 aa).

Residues Glu17–Asp63 enclose the F-box domain. LRR repeat units follow at residues Tyr103–Ser123, Val124–Arg150, Val151–Phe171, Val172–Lys197, Ser199–Arg224, Asn226–Asn252, Asn273–Asp299, Ile300–Val321, Cys322–Leu347, Val369–Glu396, and Ser398–Gln423. The FBD domain occupies Glu356–Ile408.

The polypeptide is F-box/FBD/LRR-repeat protein At5g53840 (Arabidopsis thaliana (Mouse-ear cress)).